Consider the following 767-residue polypeptide: Syn-copalyl diphosphate synthase (767 aa).

The disordered stretch occupies residues 45–74 (GPMLISKSPPYPASEETREWEAEGQHEHTD). Over residues 59–74 (EETREWEAEGQHEHTD) the composition is skewed to basic and acidic residues. K233 contacts substrate. Mg(2+) is bound by residues D365 and D367. Positions 365–368 (DIDD) match the DXDD motif motif. Substrate is bound at residue K453.

Requires Mg(2+) as cofactor.

The catalysed reaction is (2E,6E,10E)-geranylgeranyl diphosphate = 9alpha-copalyl diphosphate. Catalyzes the conversion of geranylgeranyl diphosphate to the phytoalexin precursor syn-copalyl diphosphate. The chain is Syn-copalyl diphosphate synthase (CPS4) from Oryza sativa subsp. indica (Rice).